A 457-amino-acid polypeptide reads, in one-letter code: Argininosuccinate lyase (457 aa).

The protein belongs to the lyase 1 family. Argininosuccinate lyase subfamily.

The protein localises to the cytoplasm. The enzyme catalyses 2-(N(omega)-L-arginino)succinate = fumarate + L-arginine. The protein operates within amino-acid biosynthesis; L-arginine biosynthesis; L-arginine from L-ornithine and carbamoyl phosphate: step 3/3. The polypeptide is Argininosuccinate lyase (Aquifex aeolicus (strain VF5)).